A 278-amino-acid chain; its full sequence is 4-deoxy-L-threo-5-hexosulose-uronate ketol-isomerase (278 aa).

Zn(2+)-binding residues include histidine 196, histidine 198, glutamate 203, and histidine 245.

Belongs to the KduI family. Requires Zn(2+) as cofactor.

It carries out the reaction 5-dehydro-4-deoxy-D-glucuronate = 3-deoxy-D-glycero-2,5-hexodiulosonate. Its pathway is glycan metabolism; pectin degradation; 2-dehydro-3-deoxy-D-gluconate from pectin: step 4/5. In terms of biological role, catalyzes the isomerization of 5-dehydro-4-deoxy-D-glucuronate to 3-deoxy-D-glycero-2,5-hexodiulosonate. In Yersinia enterocolitica serotype O:8 / biotype 1B (strain NCTC 13174 / 8081), this protein is 4-deoxy-L-threo-5-hexosulose-uronate ketol-isomerase.